The sequence spans 208 residues: Ribonuclease HII (208 aa).

Residues 1 to 205 enclose the RNase H type-2 domain; sequence MIVVGIDEAG…LQEIAPNYYI (205 aa). A divalent metal cation-binding residues include Asp7, Glu8, and Asp104.

The protein belongs to the RNase HII family. The cofactor is Mn(2+). Mg(2+) serves as cofactor.

It localises to the cytoplasm. The catalysed reaction is Endonucleolytic cleavage to 5'-phosphomonoester.. Endonuclease that specifically degrades the RNA of RNA-DNA hybrids. The protein is Ribonuclease HII of Sulfurisphaera tokodaii (strain DSM 16993 / JCM 10545 / NBRC 100140 / 7) (Sulfolobus tokodaii).